The following is a 298-amino-acid chain: Protoheme IX farnesyltransferase (298 aa).

Transmembrane regions (helical) follow at residues 26-46 (IVIL…GGPP), 48-68 (LGLT…ANAI), 110-130 (FLVL…GLLF), 147-167 (IVIG…AVTG), 174-194 (VIMF…LALF), 220-240 (ILLY…TGTV), 243-263 (LYLW…VGLL), and 276-296 (TYGW…LDVT).

The protein belongs to the UbiA prenyltransferase family. Protoheme IX farnesyltransferase subfamily. Interacts with CtaA.

Its subcellular location is the cell membrane. It catalyses the reaction heme b + (2E,6E)-farnesyl diphosphate + H2O = Fe(II)-heme o + diphosphate. Its pathway is porphyrin-containing compound metabolism; heme O biosynthesis; heme O from protoheme: step 1/1. Its function is as follows. Converts heme B (protoheme IX) to heme O by substitution of the vinyl group on carbon 2 of heme B porphyrin ring with a hydroxyethyl farnesyl side group. This is Protoheme IX farnesyltransferase from Symbiobacterium thermophilum (strain DSM 24528 / JCM 14929 / IAM 14863 / T).